The chain runs to 207 residues: LexA repressor (207 aa).

Positions 28 to 48 (VREIGEAVGLASSSTVHGHLA) form a DNA-binding region, H-T-H motif. Catalysis depends on for autocatalytic cleavage activity residues S129 and K167.

The protein belongs to the peptidase S24 family. In terms of assembly, homodimer.

It carries out the reaction Hydrolysis of Ala-|-Gly bond in repressor LexA.. In terms of biological role, represses a number of genes involved in the response to DNA damage (SOS response), including recA and lexA. In the presence of single-stranded DNA, RecA interacts with LexA causing an autocatalytic cleavage which disrupts the DNA-binding part of LexA, leading to derepression of the SOS regulon and eventually DNA repair. The polypeptide is LexA repressor (Geobacillus sp. (strain WCH70)).